The primary structure comprises 139 residues: Protein archease (139 aa).

3 residues coordinate Ca(2+): D12, D138, and I139.

The protein belongs to the archease family.

Activates the tRNA-splicing ligase complex by facilitating the enzymatic turnover of catalytic subunit RtcB. Acts by promoting the guanylylation of RtcB, a key intermediate step in tRNA ligation. Can also alter the NTP specificity of RtcB such that ATP, dGTP or ITP is used efficiently. The polypeptide is Protein archease (Sulfolobus acidocaldarius (strain ATCC 33909 / DSM 639 / JCM 8929 / NBRC 15157 / NCIMB 11770)).